We begin with the raw amino-acid sequence, 119 residues long: Protein TusC (119 aa).

The protein belongs to the DsrF/TusC family. In terms of assembly, heterohexamer, formed by a dimer of trimers. The hexameric TusBCD complex contains 2 copies each of TusB, TusC and TusD. The TusBCD complex interacts with TusE.

It is found in the cytoplasm. Its function is as follows. Part of a sulfur-relay system required for 2-thiolation of 5-methylaminomethyl-2-thiouridine (mnm(5)s(2)U) at tRNA wobble positions. This chain is Protein TusC, found in Escherichia coli O45:K1 (strain S88 / ExPEC).